Reading from the N-terminus, the 145-residue chain is Secreted LysM effector Vd2LysM (145 aa).

The signal sequence occupies residues 1 to 18 (MRPDVFVLFTAFLGPAAA). LysM domains are found at residues 31–75 (GWYI…KIKV) and 96–140 (GWYH…DIVV).

Belongs to the secreted LysM effector family. In terms of assembly, forms homodimers in a chitin-independent manner through interactions at the N-termini of EPL2 monomers. Homodimers are further polymerized in a chitin-dependent manner.

Secreted effector that enables the plant pathogenic fungus to manipulate host defenses for successful infection. Binds chitin, suppresses chitin-induced immune responses and protects hyphae against degradation by plant hydrolytic enzymes. Chitin-induced polymerization of homodimers forms a contiguous ELP2 highly oligomeric super-complexe that may precipitate at infection sites to eliminate chitin oligomers, and thus suppress the activation of chitin-induced plant immunity. The protein is Secreted LysM effector Vd2LysM of Verticillium dahliae (strain VdLs.17 / ATCC MYA-4575 / FGSC 10137) (Verticillium wilt).